The sequence spans 468 residues: 3-isopropylmalate dehydratase large subunit (468 aa).

[4Fe-4S] cluster contacts are provided by cysteine 347, cysteine 408, and cysteine 411.

Belongs to the aconitase/IPM isomerase family. LeuC type 1 subfamily. Heterodimer of LeuC and LeuD. [4Fe-4S] cluster serves as cofactor.

The catalysed reaction is (2R,3S)-3-isopropylmalate = (2S)-2-isopropylmalate. It functions in the pathway amino-acid biosynthesis; L-leucine biosynthesis; L-leucine from 3-methyl-2-oxobutanoate: step 2/4. Catalyzes the isomerization between 2-isopropylmalate and 3-isopropylmalate, via the formation of 2-isopropylmaleate. The protein is 3-isopropylmalate dehydratase large subunit of Methylobacillus flagellatus (strain ATCC 51484 / DSM 6875 / VKM B-1610 / KT).